The chain runs to 616 residues: Protein SpAN (616 aa).

The N-terminal stretch at 1-16 (MKLVLLLAGFAALAKC) is a signal peptide. A propeptide spans 17-93 (SLAAPAGVQK…DQKAGRKKRK (77 aa)) (activation peptide). Positions 30–67 (METSAPEKPSEATTLGLLKTPKPEPKDEEPSPGAFQGD) are disordered. A Peptidase M12A domain is found at 93–294 (KATIYESQRW…ELANRIYECD (202 aa)). 6 disulfides stabilise this stretch: cysteine 134-cysteine 293, cysteine 162-cysteine 182, cysteine 299-cysteine 317, cysteine 319-cysteine 328, cysteine 340-cysteine 366, and cysteine 393-cysteine 413. Histidine 190 provides a ligand contact to Zn(2+). Glutamate 191 is an active-site residue. Residues histidine 194 and histidine 200 each coordinate Zn(2+). The EGF-like domain maps to 289–329 (RIYECDDVEDCSNADECLNGGYHDADCDCVCPSSYSGDLCQ). Positions 340–450 (CSYRFTEMTG…RGFKATYVII (111 aa)) constitute a CUB 1 domain. Positions 461-491 (TLQTTPPSTTTLQTTNPSTTTLQTTNPSTTT) are disordered. Intrachain disulfides connect cysteine 503-cysteine 529 and cysteine 556-cysteine 576. Positions 503-614 (CGGTFVGVEG…RGFVASYRAI (112 aa)) constitute a CUB 2 domain.

The cofactor is Zn(2+). As to expression, asymmetrically along the animal-vegetal axis of the blastula.

The polypeptide is Protein SpAN (SPAN) (Strongylocentrotus purpuratus (Purple sea urchin)).